We begin with the raw amino-acid sequence, 118 residues long: Small ribosomal subunit protein uS13 (118 aa).

The disordered stretch occupies residues His91–Lys118.

Belongs to the universal ribosomal protein uS13 family. As to quaternary structure, part of the 30S ribosomal subunit. Forms a loose heterodimer with protein S19. Forms two bridges to the 50S subunit in the 70S ribosome.

In terms of biological role, located at the top of the head of the 30S subunit, it contacts several helices of the 16S rRNA. In the 70S ribosome it contacts the 23S rRNA (bridge B1a) and protein L5 of the 50S subunit (bridge B1b), connecting the 2 subunits; these bridges are implicated in subunit movement. Contacts the tRNAs in the A and P-sites. This is Small ribosomal subunit protein uS13 from Photorhabdus laumondii subsp. laumondii (strain DSM 15139 / CIP 105565 / TT01) (Photorhabdus luminescens subsp. laumondii).